A 244-amino-acid chain; its full sequence is MSTGLDMSLDDMIAKNRKSRGGAGPARGTGSGSGPGPTRRNNPNRKSTRSAPYQSAKAPESTWGHDMFSDRSEDHRSGRSSAGIETGTKLYISNLDYGVMNEDIKELFAEVGELKRYTVHFDRSGRSKGTAEVVYSRRGDALAAVKKYNDVQLDGKPMKIEIVGTNLQTAAAPSGRPANGNSNGAPWRGGQGRGGQQRGGGRGGGGRGGGGRGRRPGKGPAEKISAEDLDADLDKYHSGDMETN.

Residues 1–82 (MSTGLDMSLD…EDHRSGRSSA (82 aa)) are disordered. Residue S2 is modified to N-acetylserine. Over residues 21–35 (GGAGPARGTGSGSGP) the composition is skewed to gly residues. The span at 67–77 (MFSDRSEDHRS) shows a compositional bias: basic and acidic residues. The RRM domain maps to 88–165 (TKLYISNLDY…KPMKIEIVGT (78 aa)). A disordered region spans residues 169–244 (TAAAPSGRPA…KYHSGDMETN (76 aa)). Over residues 187–211 (WRGGQGRGGQQRGGGRGGGGRGGGG) the composition is skewed to gly residues. A compositionally biased stretch (basic and acidic residues) spans 220–244 (PAEKISAEDLDADLDKYHSGDMETN).

Belongs to the ALYREF family.

The protein localises to the nucleus. The protein resides in the nucleoplasm. Its subcellular location is the nucleolus. Its function is as follows. Export adapter involved in nuclear export of spliced and unspliced mRNA. The polypeptide is THO complex subunit 4A (ALY1) (Arabidopsis thaliana (Mouse-ear cress)).